The primary structure comprises 104 residues: 2,4-dinitrotoluene dioxygenase system, ferredoxin component (104 aa).

The interval 1 to 21 (MSENWIDAAARDEVPRGRRDR) is disordered. Positions 5–101 (WIDAAARDEV…VKIENMRVML (97 aa)) constitute a Rieske domain. 4 residues coordinate [2Fe-2S] cluster: Cys-45, His-47, Cys-64, and His-67.

It belongs to the bacterial ring-hydroxylating dioxygenase ferredoxin component family. The 2,4-dinitrotoluene dioxygenase (DNTDO) multicomponent enzyme system is composed of an electron transfer component and a dioxygenase component (iron sulfur protein (ISP)). The electron transfer component is composed of a ferredoxin reductase (DntAa) and a ferredoxin (DntAb), and the dioxygenase component is formed of a large alpha subunit (DntAc) and a small beta subunit (DntAd). It depends on [2Fe-2S] cluster as a cofactor.

Component of the 2,4-dinitrotoluene dioxygenase (DNTDO) multicomponent enzyme system which catalyzes the incorporation of both atoms of molecular oxygen into 2,4-dinitrotoluene (DNT) to form 4-methyl-5-nitrocatechol (MNC) and nitrite. Functions as an intermediate electron transfer protein via a specific interaction with iron sulfur protein components (ISP)(DntAc and DntAd). Also able to convert naphthalene to cis-(1R,2S)-dihydroxy-1,2-dihydronaphthalene. The chain is 2,4-dinitrotoluene dioxygenase system, ferredoxin component from Burkholderia sp. (strain RASC).